The primary structure comprises 209 residues: MSQVDINHARALVYQLLSSLFAREVDEQRLKELTSEAAQQFWEQLSLEANFTQSVDKIRSTLNGIKDDEALLELAADYCGLFLVGTKHSASPYASLYLSGEDEPLLFGEQHQQMSEFLHQSKLQVQSHFPEPADHLAVMLAYMAHLCCHSEDSVQLSFLQTCVDSWLAKFINQLTQCHKNGFYSAVATLTLAWVKQDIAQLEPAVAVIS.

This sequence belongs to the TorD/DmsD family. TorD subfamily.

The protein resides in the cytoplasm. Involved in the biogenesis of TorA. Acts on TorA before the insertion of the molybdenum cofactor and, as a result, probably favors a conformation of the apoenzyme that is competent for acquiring the cofactor. The protein is Chaperone protein TorD of Shewanella baltica (strain OS155 / ATCC BAA-1091).